We begin with the raw amino-acid sequence, 327 residues long: Putative HTH-type transcriptional regulatory protein Mevan_1514 (327 aa).

An HTH cro/C1-type domain is found at Leu128–Phe189. Residues Val139 to Gln158 constitute a DNA-binding region (H-T-H motif).

The chain is Putative HTH-type transcriptional regulatory protein Mevan_1514 from Methanococcus vannielii (strain ATCC 35089 / DSM 1224 / JCM 13029 / OCM 148 / SB).